The following is a 284-amino-acid chain: MEMO1 family protein Mevan_0697 (284 aa).

This sequence belongs to the MEMO1 family.

This Methanococcus vannielii (strain ATCC 35089 / DSM 1224 / JCM 13029 / OCM 148 / SB) protein is MEMO1 family protein Mevan_0697.